A 238-amino-acid polypeptide reads, in one-letter code: tRNA (guanine-N(1)-)-methyltransferase (238 aa).

Position 132 to 137 (Ile132 to Leu137) interacts with S-adenosyl-L-methionine.

This sequence belongs to the RNA methyltransferase TrmD family. Homodimer.

Its subcellular location is the cytoplasm. The enzyme catalyses guanosine(37) in tRNA + S-adenosyl-L-methionine = N(1)-methylguanosine(37) in tRNA + S-adenosyl-L-homocysteine + H(+). In terms of biological role, specifically methylates guanosine-37 in various tRNAs. The chain is tRNA (guanine-N(1)-)-methyltransferase from Nitrobacter hamburgensis (strain DSM 10229 / NCIMB 13809 / X14).